Here is a 420-residue protein sequence, read N- to C-terminus: Sulfate adenylyltransferase (420 aa).

The protein belongs to the sulfate adenylyltransferase family.

The catalysed reaction is sulfate + ATP + H(+) = adenosine 5'-phosphosulfate + diphosphate. The protein operates within sulfur metabolism; hydrogen sulfide biosynthesis; sulfite from sulfate: step 1/3. The chain is Sulfate adenylyltransferase from Desulforudis audaxviator (strain MP104C).